A 291-amino-acid polypeptide reads, in one-letter code: Sesquiterpene cyclase astC (291 aa).

The protein belongs to the HAD-like hydrolase superfamily.

It carries out the reaction (2E,6E)-farnesyl diphosphate = (S,S)-drim-8-en-11-yl diphosphate. The protein operates within secondary metabolite biosynthesis; terpenoid biosynthesis. Sesquiterpene cyclase; part of the gene cluster that mediates the biosynthesis of astellolides, drimane-type sesquiterpene esters that show antimicrobial, anti-inflammatory, and anti-tumor activities. The first step in astellolide biosynthesis is performed by the sesquiterpene cyclase astC that catalyzes the formation of drimanyl pyrophosphate from farnesyl pyrophosphate. Drimanyl pyrophosphate is then dephosphorylated by the sesquiterpene phosphatase astI to produce drimanyl monophosphate which is further dephosphorylated to drim-8-ene-11-ol by atsK. Drim-8-ene-11-ol is converted to confertifolin, probably by the cytochrome P450 monooxygenase astD and/or the dehydrogenase astE. The cytochrome P450 monooxygenases astB, astF and astJ then hydroxylate confertifolin at C6, C14, or C15 to form trihydroxy confertifolin. The nonribosomal peptide synthetase astA catalyzes ester bond formation between trihydroxy contifolin and benzoic acid (BA) or 4-hydroxy benzoic acid (4HBA), leading to the formation of dideacetyl astellolides A and B, respectively. Finally, the O-acetyltransferase astG converts dideacetyl astellolides A and B into deacetyl astellolides A and B. This chain is Sesquiterpene cyclase astC, found in Aspergillus oryzae (strain ATCC 42149 / RIB 40) (Yellow koji mold).